A 299-amino-acid chain; its full sequence is Kruppel-like factor 2 (299 aa).

Disordered stretches follow at residues 19–38 (YQNAHHQHHQQHYHQQSHHH) and 146–189 (YSFS…RRDK). Over residues 23–38 (HHQHHQQHYHQQSHHH) the composition is skewed to basic residues. The span at 153-180 (SGKDEEDPRIPLKDRGRVYHPQSTEKPK) shows a compositional bias: basic and acidic residues. 3 C2H2-type zinc fingers span residues 198–222 (HKCFYQGCGKVYTKSSHLTAHERVH), 228–252 (YPCEWPGCSWRFARSDELTRHYRKH), and 258–280 (FACKECSRKFSRSDHLQLHMKRH).

The protein belongs to the krueppel C2H2-type zinc-finger protein family. Expressed predominantly in intestine.

It is found in the nucleus. In terms of biological role, probable transcription factor which regulates lipid metabolism. This chain is Kruppel-like factor 2, found in Caenorhabditis elegans.